A 604-amino-acid polypeptide reads, in one-letter code: Nuclear factor erythroid 2-related factor 2 (604 aa).

The DLG motif motif lies at 29-31 (DLG). S40 carries the post-translational modification Phosphoserine; by PKC. Positions 79 to 82 (ETGE) match the ETGE motif motif. A Phosphoserine modification is found at S214. Positions 334-447 (TVEFNDSDSG…VPFTKDKHSS (114 aa)) are disordered. 2 stretches are compositionally biased toward polar residues: residues 340–352 (SDSG…SPSR) and 395–407 (PTHS…QPLS). N-linked (Glc) (glycation) lysine glycosylation is found at K461, K471, and K486. Residues 496-559 (LIRDIRRRGK…HLLKRKLSTL (64 aa)) enclose the bZIP domain. A glycan (N-linked (Glc) (glycation) arginine) is linked at R498. The segment at 498–517 (RDIRRRGKNKVAAQNCRKRK) is basic motif. The interval 521 to 528 (IVELEQDL) is leucine-zipper. R568 carries an N-linked (Glc) (glycation) arginine glycan. The disordered stretch occupies residues 570 to 604 (EDGKPYSPSEYSLQQTRDGNVFLVPKSKKPDTKKN). K573 is a glycosylation site (N-linked (Glc) (glycation) lysine). Over residues 578-587 (SEYSLQQTRD) the composition is skewed to polar residues. The segment at 590–595 (VFLVPK) is mediates interaction with CHD6 and is necessary to activate transcription. N6-acetyllysine; by CREBBP is present on residues K595 and K598.

The protein belongs to the bZIP family. CNC subfamily. As to quaternary structure, heterodimer; heterodimerizes with small Maf proteins. Interacts (via the bZIP domain) with MAFG and MAFK; required for binding to antioxidant response elements (AREs) on DNA. Interacts with KEAP1; the interaction is direct and promotes ubiquitination by the BCR(KEAP1) E3 ubiquitin ligase complex. Forms a ternary complex with PGAM5 and KEAP1. Interacts with EEF1D at heat shock promoter elements (HSE). Interacts via its leucine-zipper domain with the coiled-coil domain of PMF1. Interacts with CHD6; involved in activation of the transcription. Interacts with ESRRB; represses NFE2L2 transcriptional activity. Interacts with MOTS-c, a peptide produced by the mitochondrially encoded 12S rRNA MT-RNR1; the interaction occurs in the nucleus following metabolic stress. Post-translationally, ubiquitinated in the cytoplasm by the BCR(KEAP1) E3 ubiquitin ligase complex leading to its degradation. In response to oxidative stress, electrophile metabolites, such as sulforaphane, modify KEAP1, leading to inhibit activity of the BCR(KEAP1) complex, promoting NFE2L2/NRF2 nuclear accumulation and activity. In response to autophagy, the BCR(KEAP1) complex is inactivated. In terms of processing, phosphorylated by EIF2AK3/PERK following unfolded protein response (UPR), promoting dissociation from its cytoplasmic inhibitor KEAP1, followed by its translocation into the nucleus. Phosphorylation of Ser-40 by PKC in response to oxidative stress dissociates NFE2L2 from its cytoplasmic inhibitor KEAP1, promoting its translocation into the nucleus. Acetylation at Lys-595 and Lys-598 increases nuclear localization whereas deacetylation by SIRT1 enhances cytoplasmic presence. Post-translationally, glycation impairs transcription factor activity by preventing heterodimerization with small Maf proteins. Deglycation by FN3K restores activity.

It localises to the cytoplasm. Its subcellular location is the cytosol. The protein localises to the nucleus. Transcription factor that plays a key role in the response to oxidative stress: binds to antioxidant response (ARE) elements present in the promoter region of many cytoprotective genes, such as phase 2 detoxifying enzymes, and promotes their expression, thereby neutralizing reactive electrophiles. In normal conditions, ubiquitinated and degraded in the cytoplasm by the BCR(KEAP1) complex. In response to oxidative stress, electrophile metabolites inhibit activity of the BCR(KEAP1) complex, promoting nuclear accumulation of NFE2L2/NRF2, heterodimerization with one of the small Maf proteins and binding to ARE elements of cytoprotective target genes. The NFE2L2/NRF2 pathway is also activated in response to selective autophagy: autophagy promotes interaction between KEAP1 and SQSTM1/p62 and subsequent inactivation of the BCR(KEAP1) complex, leading to NFE2L2/NRF2 nuclear accumulation and expression of cytoprotective genes. The NFE2L2/NRF2 pathway is also activated during the unfolded protein response (UPR), contributing to redox homeostasis and cell survival following endoplasmic reticulum stress. May also be involved in the transcriptional activation of genes of the beta-globin cluster by mediating enhancer activity of hypersensitive site 2 of the beta-globin locus control region. Also plays an important role in the regulation of the innate immune response. It is a critical regulator of the innate immune response and survival during sepsis by maintaining redox homeostasis and restraint of the dysregulation of pro-inflammatory signaling pathways like MyD88-dependent and -independent and TNF-alpha signaling. Suppresses macrophage inflammatory response by blocking pro-inflammatory cytokine transcription and the induction of IL6. Binds to the proximity of pro-inflammatory genes in macrophages and inhibits RNA Pol II recruitment. The inhibition is independent of the Nrf2-binding motif and reactive oxygen species level. Represses antiviral cytosolic DNA sensing by suppressing the expression of the adapter protein STING1 and decreasing responsiveness to STING1 agonists while increasing susceptibility to infection with DNA viruses. The sequence is that of Nuclear factor erythroid 2-related factor 2 from Rattus norvegicus (Rat).